We begin with the raw amino-acid sequence, 362 residues long: MGNHTWEGCHVDSRVDHLFPPSLYIFVIGVGLPTNCLALWAAYRQVQQRNELGVYLMNLSIADLLYICTLPLWVDYFLHHDNWIHGPGSCKLFGFIFYTNIYISIAFLCCISVDRYLAVAHPLRFARLRRVKTAVAVSSVVWATELGANSAPLFHDELFRDRYNHTFCFEKFPMEGWVAWMNLYRVFVGFLFPWALMLLSYRGILRAVRGSVSTERQEKAKIKRLALSLIAIVLVCFAPYHVLLLSRSAIYLGRPWDCGFEERVFSAYHSSLAFTSLNCVADPILYCLVNEGARSDVAKALHNLLRFLASDKPQEMANASLTLETPLTSKRNSTAKAMTGSWAATPPSQGDQVQLKMLPPAQ.

The Extracellular segment spans residues 1 to 8 (MGNHTWEG). Asparagine 3 is a glycosylation site (N-linked (GlcNAc...) asparagine). Residues 9-45 (CHVDSRVDHLFPPSLYIFVIGVGLPTNCLALWAAYRQ) traverse the membrane as a helical segment. Cystine bridges form between cysteine 9–cysteine 258 and cysteine 90–cysteine 168. Topologically, residues 46–49 (VQQR) are cytoplasmic. A helical membrane pass occupies residues 50–80 (NELGVYLMNLSIADLLYICTLPLWVDYFLHH). The Extracellular segment spans residues 81–85 (DNWIH). A helical transmembrane segment spans residues 86-121 (GPGSCKLFGFIFYTNIYISIAFLCCISVDRYLAVAH). Topologically, residues 122–129 (PLRFARLR) are cytoplasmic. Residues 130–156 (RVKTAVAVSSVVWATELGANSAPLFHD) form a helical membrane-spanning segment. Residues 157 to 172 (ELFRDRYNHTFCFEKF) lie on the Extracellular side of the membrane. Positions 157–172 (ELFRDRYNHTFCFEKF) are extracellular loop 2 (ECL2). An N-linked (GlcNAc...) asparagine glycan is attached at asparagine 164. Residues 173 to 210 (PMEGWVAWMNLYRVFVGFLFPWALMLLSYRGILRAVRG) form a helical membrane-spanning segment. Residues 211 to 214 (SVST) are Cytoplasmic-facing. A helical membrane pass occupies residues 215–250 (ERQEKAKIKRLALSLIAIVLVCFAPYHVLLLSRSAI). The Extracellular portion of the chain corresponds to 251–260 (YLGRPWDCGF). Residues 261-289 (EERVFSAYHSSLAFTSLNCVADPILYCLV) form a helical membrane-spanning segment. Residues 290–362 (NEGARSDVAK…VQLKMLPPAQ (73 aa)) lie on the Cytoplasmic side of the membrane. The interval 335-362 (AKAMTGSWAATPPSQGDQVQLKMLPPAQ) is disordered.

It belongs to the G-protein coupled receptor 1 family.

It localises to the cell membrane. Its activity is regulated as follows. Activated by a network of residues that connects an extracellular-facing cavity to Glu-145, a conserved charged residue buried in the transmembrane core of the receptor. Protonation likely drives conformational changes in extracellular loop 2 (ECL2), which stabilizes movement of transmembrane 3 (TM3) and a series of rearrangements that connect the extracellular-facing cavity to Glu-145, a residue only conserved in proton-sensing G-protein coupled receptors. Functionally, proton-sensing G-protein coupled receptor activated by extracellular pH, which is required to monitor pH changes and generate adaptive reactions. Activated by an optimal pH of 6.8-7.2. Ligand binding causes a conformation change that triggers signaling via guanine nucleotide-binding proteins (G proteins) and modulates the activity of downstream effectors, such as adenylate cyclase. GPR4 is mainly coupled to G(s) G proteins and mediates activation of adenylate cyclase activity. May also couple with G(q) and G(12)/G(13) G proteins. Acts as a key regulator of respiratory sensitivity to CO2/H(+) in brain retrotrapezoid nucleus neurons: acts by mediating detection of protons generated by the formation of carbonic acid in the blood, an important mechanism to impulse to breathe. Also acts as a regulator of acid secretion in the kidney collecting duct by maintaining acid-base homeostasis in the kidney. Acidosis-induced GPR4 activation increases paracellular gap formation and permeability of vascular endothelial cells, possibly through the G(12)/G(13)/Rho GTPase signaling pathway. The protein is G-prodeshotein coupled receptor 4 of Homo sapiens (Human).